The following is a 118-amino-acid chain: Ribosome-binding factor A (118 aa).

The protein belongs to the RbfA family. In terms of assembly, monomer. Binds 30S ribosomal subunits, but not 50S ribosomal subunits or 70S ribosomes.

It is found in the cytoplasm. In terms of biological role, one of several proteins that assist in the late maturation steps of the functional core of the 30S ribosomal subunit. Associates with free 30S ribosomal subunits (but not with 30S subunits that are part of 70S ribosomes or polysomes). Required for efficient processing of 16S rRNA. May interact with the 5'-terminal helix region of 16S rRNA. The protein is Ribosome-binding factor A of Geobacter sulfurreducens (strain ATCC 51573 / DSM 12127 / PCA).